The sequence spans 614 residues: MAGIARLPESVANKISAGEVVQRPVSVVKELLENAIDAGADRISVIISDAGKELVRIVDNGCGMERDDALLSVERFATSKIRGVEDLEDLSSLGFRGEALASISSVSHFELRTAVEGSPLALSFRYEGGVLVEEARVQGERGTSISVRNLFYNVPARRKFLKSNATEYGHIYELVRSFVLACPEISWQMVNDGEELFNFRTPDLNERLDFFYGSGFAESLVPVTEENDYISIRGFIGRPALQKRRRLDQYFFINRRLVQNRMLSQALQQAYGELLVERQAPFALLFFEMDPSRIDVNVHPAKLEVRFEDERSVRNMFYPVIKRAVRSYDFSPDLASGELPPLSTRYPSPSPIAFQDVAEPAVTKGELYRNYREGAFSTSRPQDNLPEGFQEQLFSPPEPPAGFVGTASLAGSGGNEDEVPLGDAVAEVKIWQLHNKYLICQIKTGLMIIDQHVAHERVLYERAVDVMETSVPNSQQLLFPQKVELRPWDWEIFEEIRDDLYRLGFNLSLFGSRTVMIEGVPQDVRPGSEVSILQDMIAEYSENASKLKLEKRDNLAKSYSCRNAIMTGQKLSLQEMRSLIDSLFATRDPYCCPHGRPVIIKMTLGQLDHMFGRK.

The protein belongs to the DNA mismatch repair MutL/HexB family.

In terms of biological role, this protein is involved in the repair of mismatches in DNA. It is required for dam-dependent methyl-directed DNA mismatch repair. May act as a 'molecular matchmaker', a protein that promotes the formation of a stable complex between two or more DNA-binding proteins in an ATP-dependent manner without itself being part of a final effector complex. The sequence is that of DNA mismatch repair protein MutL from Chlorobium phaeovibrioides (strain DSM 265 / 1930) (Prosthecochloris vibrioformis (strain DSM 265)).